Consider the following 334-residue polypeptide: Trans-O-hydroxybenzylidenepyruvate hydratase-aldolase (334 aa).

This sequence belongs to the DapA family.

It catalyses the reaction (3E)-4-(2-hydroxyphenyl)-2-oxobut-3-enoate + H2O = salicylaldehyde + pyruvate. It participates in aromatic compound metabolism; naphthalene degradation. Involved in the naphthalene upper catabolic pathway. Catalyzes the transformation of trans-O-hydroxybenzylidenepyruvate (THBPA) to salicylaldehyde and pyruvate. The reaction is reversible. This chain is Trans-O-hydroxybenzylidenepyruvate hydratase-aldolase (pahE), found in Pseudomonas aeruginosa.